The following is an 850-amino-acid chain: Receptor-like serine/threonine-protein kinase SD1-8 (850 aa).

Positions 1 to 26 (MRGLPNFYHSYTFFFFFLLILFPAYS) are cleaved as a signal peptide. Residues 27–441 (ISANTLSASE…LEDKRNRSAK (415 aa)) lie on the Extracellular side of the membrane. The region spanning 31–153 (TLSASESLTI…KNSAPDGVLW (123 aa)) is the Bulb-type lectin domain. N-linked (GlcNAc...) asparagine glycosylation is found at Asn-43, Asn-118, and Asn-242. Positions 292-328 (PKDQCDEYKECGVYGYCDSNTSPVCNCIKGFKPRNPQ) constitute an EGF-like domain. Intrachain disulfides connect Cys-296-Cys-308, Cys-302-Cys-316, Cys-378-Cys-403, and Cys-382-Cys-388. Positions 347-428 (CGGGDGFVRL…GGQDLYVRLA (82 aa)) constitute a PAN domain. 2 N-linked (GlcNAc...) asparagine glycosylation sites follow: Asn-387 and Asn-437. A helical transmembrane segment spans residues 442–462 (IIGSSIGVSVLLLLSFIIFFL). Topologically, residues 463-850 (WKRKQKRSIL…QITVSVLDAR (388 aa)) are cytoplasmic. One can recognise a Protein kinase domain in the interval 526-807 (FSNANKLGQG…LMLGSESTTI (282 aa)). Residues 532–540 (LGQGGFGIV) and Lys-554 contribute to the ATP site. Positions 615–632 (SRNSKLNWQMRFDIINGI) are caM-binding. Asp-651 (proton acceptor) is an active-site residue.

Belongs to the protein kinase superfamily. Ser/Thr protein kinase family. In terms of assembly, interacts with PUB9, PUB13, PUB14 and PUB38. Expressed in the root-hypocotyl transition zone, at the base of lateral roots, axillary buds and pedicels.

It is found in the cell membrane. The catalysed reaction is L-seryl-[protein] + ATP = O-phospho-L-seryl-[protein] + ADP + H(+). The enzyme catalyses L-threonyl-[protein] + ATP = O-phospho-L-threonyl-[protein] + ADP + H(+). Its function is as follows. Involved in the regulation of cellular expansion and differentiation. The polypeptide is Receptor-like serine/threonine-protein kinase SD1-8 (SD18) (Arabidopsis thaliana (Mouse-ear cress)).